A 40-amino-acid chain; its full sequence is Sauvagin (40 aa).

Residue Q1 is modified to Pyrrolidone carboxylic acid. An Isoleucine amide modification is found at I40.

This sequence belongs to the sauvagine/corticotropin-releasing factor/urotensin I family.

It is found in the secreted. Hypotensive and diuretic peptide. The sequence is that of Sauvagin from Phyllomedusa sauvagei (Sauvage's leaf frog).